The chain runs to 358 residues: Feruloyl CoA ortho-hydroxylase F6H1-1 (358 aa).

Residues 200 to 308 (TKESLLMGSK…RISVPIFVNP (109 aa)) form the Fe2OG dioxygenase domain. Residue Y216 participates in 2-oxoglutarate binding. The Fe cation site is built by H231, D233, and H289. 2 residues coordinate 2-oxoglutarate: R299 and S301.

This sequence belongs to the iron/ascorbate-dependent oxidoreductase family. The cofactor is L-ascorbate. It depends on Fe(2+) as a cofactor.

The enzyme catalyses (E)-feruloyl-CoA + 2-oxoglutarate + O2 = (E)-6-hydroxyferuloyl-CoA + succinate + CO2. The protein operates within phenylpropanoid metabolism. Functionally, 2-oxoglutarate (OG)- and Fe(II)-dependent dioxygenase (2OGD) involved in scopoletin biosynthesis. Converts feruloyl CoA into 6'-hydroxyferuloyl CoA. This Ipomoea batatas (Sweet potato) protein is Feruloyl CoA ortho-hydroxylase F6H1-1.